The primary structure comprises 162 residues: Protein A49 (162 aa).

The protein belongs to the poxviridae A49 protein family.

This Homo sapiens (Human) protein is Protein A49.